The following is a 340-amino-acid chain: Centromere protein N (340 aa).

A phosphoserine mark is found at Ser227 and Ser236.

The protein belongs to the CENP-N/CHL4 family. In terms of assembly, component of the CENPA-NAC complex, at least composed of CENPA, CENPC, CENPH, CENPM, CENPN, CENPT and CENPU. The CENPA-NAC complex interacts with the CENPA-CAD complex, composed of CENPI, CENPK, CENPL, CENPO, CENPP, CENPQ, CENPR and CENPS. Interacts directly with CENPA. Identified in a centromere complex containing histones H2A, H2B and H4, and at least CENPA, CENPB, CENPC, CENPT, CENPN, HJURP, SUPT16H, SSRP1 and RSF1.

The protein resides in the nucleus. Its subcellular location is the chromosome. It is found in the centromere. It localises to the kinetochore. Its function is as follows. Component of the CENPA-NAC (nucleosome-associated) complex, a complex that plays a central role in assembly of kinetochore proteins, mitotic progression and chromosome segregation. The CENPA-NAC complex recruits the CENPA-CAD (nucleosome distal) complex and may be involved in incorporation of newly synthesized CENPA into centromeres. CENPN is the first protein to bind specifically to CENPA nucleosomes and the direct binding of CENPA nucleosomes by CENPN is required for centromere assembly. Required for chromosome congression and efficiently align the chromosomes on a metaphase plate. The chain is Centromere protein N (Cenpn) from Rattus norvegicus (Rat).